Here is a 96-residue protein sequence, read N- to C-terminus: Putative pterin-4-alpha-carbinolamine dehydratase (96 aa).

The protein belongs to the pterin-4-alpha-carbinolamine dehydratase family.

The enzyme catalyses (4aS,6R)-4a-hydroxy-L-erythro-5,6,7,8-tetrahydrobiopterin = (6R)-L-erythro-6,7-dihydrobiopterin + H2O. The sequence is that of Putative pterin-4-alpha-carbinolamine dehydratase from Prochlorococcus marinus (strain MIT 9312).